A 421-amino-acid polypeptide reads, in one-letter code: UDP-N-acetylglucosamine 1-carboxyvinyltransferase (421 aa).

Residue 22 to 23 (KN) participates in phosphoenolpyruvate binding. Position 93 (R93) interacts with UDP-N-acetyl-alpha-D-glucosamine. The active-site Proton donor is the C117. C117 carries the 2-(S-cysteinyl)pyruvic acid O-phosphothioketal modification. Residues 122–126 (RPVDL), D308, and V330 contribute to the UDP-N-acetyl-alpha-D-glucosamine site.

This sequence belongs to the EPSP synthase family. MurA subfamily.

It localises to the cytoplasm. The enzyme catalyses phosphoenolpyruvate + UDP-N-acetyl-alpha-D-glucosamine = UDP-N-acetyl-3-O-(1-carboxyvinyl)-alpha-D-glucosamine + phosphate. It participates in cell wall biogenesis; peptidoglycan biosynthesis. In terms of biological role, cell wall formation. Adds enolpyruvyl to UDP-N-acetylglucosamine. This is UDP-N-acetylglucosamine 1-carboxyvinyltransferase from Ectopseudomonas mendocina (strain ymp) (Pseudomonas mendocina).